We begin with the raw amino-acid sequence, 65 residues long: UPF0370 protein Ent638_2968 (65 aa).

Residues 4 to 24 (LSKYWWILVLVFLVGVLLNVI) traverse the membrane as a helical segment. The tract at residues 39–65 (KPELPPHRDFNDKWDDDDNWPKKDQKK) is disordered. Basic and acidic residues predominate over residues 42-65 (LPPHRDFNDKWDDDDNWPKKDQKK).

The protein belongs to the UPF0370 family.

The protein resides in the cell membrane. The sequence is that of UPF0370 protein Ent638_2968 from Enterobacter sp. (strain 638).